The primary structure comprises 256 residues: Probable S-methyl-5'-thioinosine phosphorylase (256 aa).

Phosphate-binding positions include T10 and 47–48; that span reads RH. Substrate is bound at residue M178. Residue T179 participates in phosphate binding. 202–204 contacts substrate; it reads NYA.

The protein belongs to the PNP/MTAP phosphorylase family. MTAP subfamily. Homotrimer.

It catalyses the reaction S-methyl-5'-thioinosine + phosphate = 5-(methylsulfanyl)-alpha-D-ribose 1-phosphate + hypoxanthine. Its pathway is purine metabolism; purine nucleoside salvage. Functionally, catalyzes the reversible phosphorylation of S-methyl-5'-thioinosine (MTI) to hypoxanthine and 5-methylthioribose-1-phosphate. Involved in the breakdown of S-methyl-5'-thioadenosine (MTA), a major by-product of polyamine biosynthesis. Catabolism of (MTA) occurs via deamination to MTI and phosphorolysis to hypoxanthine. In Methanopyrus kandleri (strain AV19 / DSM 6324 / JCM 9639 / NBRC 100938), this protein is Probable S-methyl-5'-thioinosine phosphorylase.